The sequence spans 534 residues: Unguisins hydrolase ungD' (534 aa).

It belongs to the peptidase S12 family.

The protein operates within secondary metabolite biosynthesis. Hydrolase; part of the gene cluster that mediates the biosynthesis of the unguisins, gamma-aminobutyric acid (GABA)-containing fungal cyclic heptapeptides with the amino acid sequence cyclo-(D-Ala1-D-Val2-L-Leu3-beta-MePhe4-D-Ala5-D-Trp6-GABA7) for unguisin H and cyclo-(D-Ala1-D-Ala2-L-Leu3-beta-MePhe4-D-Ala5-D-Trp6-GABA7) for unguisin I. Within the pathway, the hydrolase ungD' catalyzes the hydrolysis between the D-tryptophan and GABA residues of unguisins H and I to produce the corresponding linear peptides. The alanine racemase ungC' catalyzes the interconversion of L-alanine and D-alanine, providing the D-alanine which is accepted by the first adenylation domain of the nonribosomal peptide synthetase (NRPS) ungA', whereas the methyltransferase ungE' provides the (2R,3R)-beta-methylphenylalanine residue incorporated by the module 4. UngA' is the main enzyme within the cluster which condenses the 7 residues using its respective 7 modules. The terminal condensation domain (Ct) is involved in cyclization with D-alanine and thereby releasing of unguisins H and I. This chain is Unguisins hydrolase ungD', found in Aspergillus campestris (strain IBT 28561).